The sequence spans 224 residues: UPF0758 protein NE1464 (224 aa).

The 123-residue stretch at 102-224 (IMDSPQSVRN…VVSFAERGLI (123 aa)) folds into the MPN domain. Zn(2+) contacts are provided by H173, H175, and D186. A JAMM motif motif is present at residues 173–186 (HNHPSGIAEPSTAD).

The protein belongs to the UPF0758 family.

This is UPF0758 protein NE1464 from Nitrosomonas europaea (strain ATCC 19718 / CIP 103999 / KCTC 2705 / NBRC 14298).